Here is a 324-residue protein sequence, read N- to C-terminus: MAYTKISDVIVPELFNPYVINTTTQLSAFFQSGIAATDDELNALAKKAGGGSTLNMPYWNDLDGDSQVLNDTDDLVPQKINAGQDKAVLILRGNAWSSHDLAATLSGSDPMQAIGSRVAAYWAREMQKIVFAELAGVFSNDDMKDNKLDISGTADGIYSAETFVDASYKLGDHESLLTAIGMHSATMASAVKQDLIEFVKDSQSGIRFPTYMNKRVIVDDSMPVETLEDGTKVFTSYLFGAGALGYAEGQPEVPTETARNALGSQDILINRKHFVLHPRGVKFTENAMAGTTPTDEELANGANWQRVYDPKKIRIVQFKHRLQA.

This sequence belongs to the lambda phage major capsid protein family. As to quaternary structure, interacts with the scaffolding protein gp11. Interacts with the decoration protein gp12.

It localises to the virion. Capsid protein self-assembles, with the help of the scaffolding protein gp11, to form an icosahedral capsid with a T=7 symmetry, about 61 nm in diameter. The capsid encapsulates the genomic DNA. The polypeptide is Major capsid protein (Bacillus subtilis (Bacteriophage SPP1)).